We begin with the raw amino-acid sequence, 317 residues long: Melanocyte-stimulating hormone receptor (317 aa).

Residues 1-37 are Extracellular-facing; that stretch reads MPMQGAQRKLLGSLNSTPTATSNLGLAANHTGAPCLE. N-linked (GlcNAc...) asparagine glycosylation occurs at Asn29. Residues 38 to 63 traverse the membrane as a helical segment; sequence VSIPDGLFLSLGLVSLVENVLVVAAV. The Cytoplasmic portion of the chain corresponds to 64-72; the sequence is AKNRNLHSS. Residues 73–93 traverse the membrane as a helical segment; sequence MYCFICCLALSDLLVSGSNML. Over 94-118 the chain is Extracellular; that stretch reads ETAVILLLETGALATRTSVVQQLHN. Residues 119–140 form a helical membrane-spanning segment; the sequence is TINVLTCSSMLCSLCFLGAIAV. Topologically, residues 141–163 are cytoplasmic; sequence DRYISIFYALRYHSIMTLPRAQR. Residues 164–183 form a helical membrane-spanning segment; it reads AIAAIWVASVLSSTLFITYY. Residues 184-191 lie on the Extracellular side of the membrane; it reads DHAAVLLC. Residues 192-211 form a helical membrane-spanning segment; that stretch reads LVVFFLAMLVLMAVLYVHML. Residues 212–240 lie on the Cytoplasmic side of the membrane; the sequence is ARACQHAHGIIRLHKRQTPAHQGFGLRGA. The helical transmembrane segment at 241–266 threads the bilayer; sequence ATLTILLGIFFLCWGPFFLHLTLVVF. The Extracellular portion of the chain corresponds to 267–279; sequence CPQHLTCSCIFKN. A helical transmembrane segment spans residues 280-300; that stretch reads FKVFLTLIICNTIIDPLIYAF. The Cytoplasmic segment spans residues 301–317; the sequence is RSQELRRTLKEVLLCSW. Cys315 carries S-palmitoyl cysteine lipidation.

It belongs to the G-protein coupled receptor 1 family. As to quaternary structure, interacts with MGRN1, but does not undergo MGRN1-mediated ubiquitination; this interaction competes with GNAS-binding and thus inhibits agonist-induced cAMP production. Interacts with OPN3; the interaction results in a decrease in MC1R-mediated cAMP signaling and ultimately a decrease in melanin production in melanocytes.

It is found in the cell membrane. Its function is as follows. Receptor for MSH (alpha, beta and gamma) and ACTH. The activity of this receptor is mediated by G proteins which activate adenylate cyclase. Mediates melanogenesis, the production of eumelanin (black/brown) and phaeomelanin (red/yellow), via regulation of cAMP signaling in melanocytes. The chain is Melanocyte-stimulating hormone receptor (MC1R) from Saguinus oedipus (Cotton-top tamarin).